A 422-amino-acid polypeptide reads, in one-letter code: Serine--tRNA ligase (422 aa).

Thr229–Glu231 contacts L-serine. ATP is bound by residues Arg260–Glu262 and Val276. Residue Glu283 participates in L-serine binding. Glu349–Ser352 serves as a coordination point for ATP. Thr384 contributes to the L-serine binding site.

It belongs to the class-II aminoacyl-tRNA synthetase family. Type-1 seryl-tRNA synthetase subfamily. As to quaternary structure, homodimer. The tRNA molecule binds across the dimer.

It is found in the cytoplasm. The catalysed reaction is tRNA(Ser) + L-serine + ATP = L-seryl-tRNA(Ser) + AMP + diphosphate + H(+). It catalyses the reaction tRNA(Sec) + L-serine + ATP = L-seryl-tRNA(Sec) + AMP + diphosphate + H(+). It participates in aminoacyl-tRNA biosynthesis; selenocysteinyl-tRNA(Sec) biosynthesis; L-seryl-tRNA(Sec) from L-serine and tRNA(Sec): step 1/1. Catalyzes the attachment of serine to tRNA(Ser). Is also able to aminoacylate tRNA(Sec) with serine, to form the misacylated tRNA L-seryl-tRNA(Sec), which will be further converted into selenocysteinyl-tRNA(Sec). This Treponema denticola (strain ATCC 35405 / DSM 14222 / CIP 103919 / JCM 8153 / KCTC 15104) protein is Serine--tRNA ligase.